A 291-amino-acid polypeptide reads, in one-letter code: START domain-containing protein 10 (291 aa).

Met1 carries the N-acetylmethionine modification. A disordered region spans residues 1-20 (MEKLAASTEPQGPRPVLGRE). The START domain occupies 14-224 (RPVLGRESVQ…MYKACLKYPE (211 aa)). N6-succinyllysine occurs at positions 94, 197, and 202. Phosphoserine occurs at positions 253 and 259. The segment at 260–291 (LENIDESAVAESREERMGGAGGEGSDDDTSLT) is disordered. Residue Ser284 is modified to Phosphoserine; by CK2. Phosphoserine is present on Ser289.

Phosphorylation at Ser-284 by CK2 negatively regulates lipid transfer activity, possibly by decreasing membrane association.

Its subcellular location is the cell projection. It localises to the cilium. The protein resides in the flagellum. The protein localises to the cytoplasm. It is found in the membrane. In terms of biological role, may play metabolic roles in sperm maturation or fertilization. Phospholipid transfer protein that preferentially selects lipid species containing a palmitoyl or stearoyl chain on the sn-1 and an unsaturated fatty acyl chain (18:1 or 18:2) on the sn-2 position. Able to transfer phosphatidylcholine (PC) and phosphatidyetanolamline (PE) between membranes. The chain is START domain-containing protein 10 (STARD10) from Homo sapiens (Human).